A 359-amino-acid polypeptide reads, in one-letter code: ATP synthase subunit gamma, chloroplastic (359 aa).

The N-terminal 35 residues, 1–35 (MSCSHLSTAWSSSALASSASTTRRRSPPRSGLLVR), are a transit peptide targeting the chloroplast. C124 is a catalytic residue. C234 and C240 are oxidised to a cystine.

This sequence belongs to the ATPase gamma chain family. As to quaternary structure, F-type ATPases have 2 components, CF(1) - the catalytic core - and CF(0) - the membrane proton channel. CF(1) has five subunits: alpha(3), beta(3), gamma(1), delta(1), epsilon(1). CF(0) has four main subunits: a, b, b' and c.

The protein resides in the plastid. It localises to the chloroplast thylakoid membrane. Its function is as follows. Produces ATP from ADP in the presence of a proton gradient across the membrane. The gamma chain is believed to be important in regulating ATPase activity and the flow of protons through the CF(0) complex. Inceptin is a proteolytic fragment produced by insect larvae that previously ingested the protein. This peptide mediate plant perception of herbivory through the induction of volatile, phenylpropanoid and protease inhibitor defenses such as ethylene, jasmonic acid and salicylic acid for example. The sequence is that of ATP synthase subunit gamma, chloroplastic from Zea mays (Maize).